The chain runs to 387 residues: Alpha-sarcoglycan (387 aa).

The N-terminal stretch at 1–23 (MAETLFWTPLLVVLLAGLGDTEA) is a signal peptide. Residues 24 to 290 (QQTTLHPLVG…APDRDFLVDA (267 aa)) are Extracellular-facing. 2 N-linked (GlcNAc...) asparagine glycosylation sites follow: Asn174 and Asn246. A helical membrane pass occupies residues 291–311 (LVTLLVPLLVALLLTLLLAYV). Over 312–387 (MCCRREGRLK…AQVPLILDQH (76 aa)) the chain is Cytoplasmic. A Phosphoserine modification is found at Ser377.

The protein belongs to the sarcoglycan alpha/epsilon family. In terms of assembly, interacts with the syntrophin SNTA1. Cross-link to form 2 major subcomplexes: one consisting of SGCB, SGCD and SGCG and the other consisting of SGCB and SGCD. The association between SGCB and SGCG is particularly strong while SGCA is loosely associated with the other sarcoglycans. As to expression, most strongly expressed in skeletal muscle. Also expressed in cardiac muscle and, at much lower levels, in lung. In the fetus, most abundant in cardiac muscle and, at lower levels, in lung. Also detected in liver and kidney. Not expressed in brain.

The protein localises to the cell membrane. It is found in the sarcolemma. Its subcellular location is the cytoplasm. It localises to the cytoskeleton. Component of the sarcoglycan complex, a subcomplex of the dystrophin-glycoprotein complex which forms a link between the F-actin cytoskeleton and the extracellular matrix. This is Alpha-sarcoglycan (SGCA) from Homo sapiens (Human).